The primary structure comprises 115 residues: Large ribosomal subunit protein bL20 (115 aa).

Belongs to the bacterial ribosomal protein bL20 family.

Its function is as follows. Binds directly to 23S ribosomal RNA and is necessary for the in vitro assembly process of the 50S ribosomal subunit. It is not involved in the protein synthesizing functions of that subunit. The chain is Large ribosomal subunit protein bL20 from Malacoplasma penetrans (strain HF-2) (Mycoplasma penetrans).